The following is a 340-amino-acid chain: MLRKIEEIKNECQARLSQVSSMEELNEFRIKTLGRKGEVTLLLRGLKDLSGEEKARAGRVANELKQNLEQMLREKIDAFKLDELEQKLLQEKIDVTLPGLPRQRGRQHPLTQITREIQDIFIGMGFTVAEGPEIELDYYNFEALNVPRDHPARDMQDSFYISEELLLRTHTSPVQVRTMEKMAPQIPIKIIVPGKVYRKDDDATHSPMFHQVEGLVIGQRITFAHLKGTLVRFAHQVFGEDVTVRYRPSFFPFTEPSAEMDISCVMCQGEGCRVCSHTGWLEILGAGMVNPRVLQYGGYDPEEVTGFAFGMGIERIAMLKYGINDLRLFFENDKRFLAQF.

E255 serves as a coordination point for Mg(2+).

The protein belongs to the class-II aminoacyl-tRNA synthetase family. Phe-tRNA synthetase alpha subunit type 1 subfamily. Tetramer of two alpha and two beta subunits. The cofactor is Mg(2+).

The protein localises to the cytoplasm. The catalysed reaction is tRNA(Phe) + L-phenylalanine + ATP = L-phenylalanyl-tRNA(Phe) + AMP + diphosphate + H(+). This chain is Phenylalanine--tRNA ligase alpha subunit, found in Syntrophomonas wolfei subsp. wolfei (strain DSM 2245B / Goettingen).